We begin with the raw amino-acid sequence, 324 residues long: Biotin synthase (324 aa).

The Radical SAM core domain maps to H50–R278. Residues C67, C71, and C74 each coordinate [4Fe-4S] cluster. [2Fe-2S] cluster contacts are provided by C143 and C203.

This sequence belongs to the radical SAM superfamily. Biotin synthase family. As to quaternary structure, homodimer. [4Fe-4S] cluster serves as cofactor. Requires [2Fe-2S] cluster as cofactor.

It catalyses the reaction (4R,5S)-dethiobiotin + (sulfur carrier)-SH + 2 reduced [2Fe-2S]-[ferredoxin] + 2 S-adenosyl-L-methionine = (sulfur carrier)-H + biotin + 2 5'-deoxyadenosine + 2 L-methionine + 2 oxidized [2Fe-2S]-[ferredoxin]. It functions in the pathway cofactor biosynthesis; biotin biosynthesis; biotin from 7,8-diaminononanoate: step 2/2. Its function is as follows. Catalyzes the conversion of dethiobiotin (DTB) to biotin by the insertion of a sulfur atom into dethiobiotin via a radical-based mechanism. This is Biotin synthase from Oleidesulfovibrio alaskensis (strain ATCC BAA-1058 / DSM 17464 / G20) (Desulfovibrio alaskensis).